Reading from the N-terminus, the 417-residue chain is Serine hydroxymethyltransferase (417 aa).

Residues Leu121 and 125-127 contribute to the (6S)-5,6,7,8-tetrahydrofolate site; that span reads GHL. Lys229 bears the N6-(pyridoxal phosphate)lysine mark. 355 to 357 is a (6S)-5,6,7,8-tetrahydrofolate binding site; the sequence is SPF.

Belongs to the SHMT family. In terms of assembly, homodimer. Pyridoxal 5'-phosphate serves as cofactor.

It localises to the cytoplasm. The catalysed reaction is (6R)-5,10-methylene-5,6,7,8-tetrahydrofolate + glycine + H2O = (6S)-5,6,7,8-tetrahydrofolate + L-serine. It participates in one-carbon metabolism; tetrahydrofolate interconversion. It functions in the pathway amino-acid biosynthesis; glycine biosynthesis; glycine from L-serine: step 1/1. Its function is as follows. Catalyzes the reversible interconversion of serine and glycine with tetrahydrofolate (THF) serving as the one-carbon carrier. This reaction serves as the major source of one-carbon groups required for the biosynthesis of purines, thymidylate, methionine, and other important biomolecules. Also exhibits THF-independent aldolase activity toward beta-hydroxyamino acids, producing glycine and aldehydes, via a retro-aldol mechanism. The chain is Serine hydroxymethyltransferase from Buchnera aphidicola subsp. Acyrthosiphon pisum (strain APS) (Acyrthosiphon pisum symbiotic bacterium).